Reading from the N-terminus, the 340-residue chain is Protein RecA (340 aa).

74 to 81 (GPESSGKT) contacts ATP.

It belongs to the RecA family.

Its subcellular location is the cytoplasm. Functionally, can catalyze the hydrolysis of ATP in the presence of single-stranded DNA, the ATP-dependent uptake of single-stranded DNA by duplex DNA, and the ATP-dependent hybridization of homologous single-stranded DNAs. It interacts with LexA causing its activation and leading to its autocatalytic cleavage. This Porphyromonas gingivalis (strain ATCC 33277 / DSM 20709 / CIP 103683 / JCM 12257 / NCTC 11834 / 2561) protein is Protein RecA.